Reading from the N-terminus, the 359-residue chain is DNA-directed RNA polymerase RPB3-11 homolog (359 aa).

This sequence in the N-terminal section; belongs to the archaeal RpoD/eukaryotic RPB3 RNA polymerase subunit family. It in the C-terminal section; belongs to the archaeal RpoL/eukaryotic RPB11/RPC19 RNA polymerase subunit family. As to quaternary structure, part of the viral DNA-directed RNA polymerase that consists of 8 polII-like subunits (RPB1, RPB2, RPB3, RPB5, RPB6, RPB7, RPB9, RPB10), a capping enzyme and a termination factor.

It is found in the host cytoplasm. It localises to the virion. In terms of biological role, component of the DNA-directed RNA polymerase (RNAP) that catalyzes the transcription in the cytoplasm of viral DNA into RNA using the four ribonucleoside triphosphates as substrates. This Ornithodoros (relapsing fever ticks) protein is DNA-directed RNA polymerase RPB3-11 homolog.